Here is a 177-residue protein sequence, read N- to C-terminus: Putative pre-16S rRNA nuclease (177 aa).

This sequence belongs to the YqgF nuclease family.

It localises to the cytoplasm. Functionally, could be a nuclease involved in processing of the 5'-end of pre-16S rRNA. This is Putative pre-16S rRNA nuclease from Psychrobacter sp. (strain PRwf-1).